We begin with the raw amino-acid sequence, 406 residues long: Zinc finger protein CONSTANS-LIKE 6 (406 aa).

4 residues coordinate Zn(2+): cysteine 17, cysteine 20, cysteine 40, and histidine 45. A B box-type; atypical zinc finger spans residues 17 to 59 (CDSCVKRRARWYCAADDAFLCHACDGSVHSANPLARRHERVRL). Residues 63–95 (SAGKYRHASPPHQATWHQGFTRKARTPRGGKKS) form a disordered region. Over residues 82–95 (FTRKARTPRGGKKS) the composition is skewed to basic residues. The CCT domain maps to 357 to 399 (REARVSRYREKRRTRLFSKKIRYEVRKLNAEKRPRMKGRFVKR).

The protein belongs to the CONSTANS family.

Its subcellular location is the nucleus. The protein is Zinc finger protein CONSTANS-LIKE 6 (COL6) of Arabidopsis thaliana (Mouse-ear cress).